We begin with the raw amino-acid sequence, 363 residues long: Histidinol-phosphate aminotransferase (363 aa).

K218 bears the N6-(pyridoxal phosphate)lysine mark.

It belongs to the class-II pyridoxal-phosphate-dependent aminotransferase family. Histidinol-phosphate aminotransferase subfamily. In terms of assembly, homodimer. Requires pyridoxal 5'-phosphate as cofactor.

It carries out the reaction L-histidinol phosphate + 2-oxoglutarate = 3-(imidazol-4-yl)-2-oxopropyl phosphate + L-glutamate. It participates in amino-acid biosynthesis; L-histidine biosynthesis; L-histidine from 5-phospho-alpha-D-ribose 1-diphosphate: step 7/9. This is Histidinol-phosphate aminotransferase from Xanthomonas axonopodis pv. citri (strain 306).